We begin with the raw amino-acid sequence, 148 residues long: Large ribosomal subunit protein bL9 (148 aa).

The protein belongs to the bacterial ribosomal protein bL9 family.

In terms of biological role, binds to the 23S rRNA. This is Large ribosomal subunit protein bL9 from Hahella chejuensis (strain KCTC 2396).